Consider the following 427-residue polypeptide: Glutamate-1-semialdehyde 2,1-aminomutase (427 aa).

Lys267 is subject to N6-(pyridoxal phosphate)lysine.

Belongs to the class-III pyridoxal-phosphate-dependent aminotransferase family. HemL subfamily. In terms of assembly, homodimer. The cofactor is pyridoxal 5'-phosphate.

It is found in the cytoplasm. It catalyses the reaction (S)-4-amino-5-oxopentanoate = 5-aminolevulinate. It participates in porphyrin-containing compound metabolism; protoporphyrin-IX biosynthesis; 5-aminolevulinate from L-glutamyl-tRNA(Glu): step 2/2. This Syntrophotalea carbinolica (strain DSM 2380 / NBRC 103641 / GraBd1) (Pelobacter carbinolicus) protein is Glutamate-1-semialdehyde 2,1-aminomutase.